A 509-amino-acid chain; its full sequence is Cation transporter HKT2;4 (509 aa).

The Cytoplasmic segment spans residues 1–32 (MPIRLHIFVSSARHAINSSALICRFIAFHLSP). 2 consecutive transmembrane segments (helical) span residues 33 to 53 (LLIH…ALVV) and 96 to 116 (VLTL…GLVL). Topologically, residues 117-164 (ESSKQNKHDPENRRVSSVTVCEQSHLEEAIPQTPSMNSTDIKRSCHKY) are cytoplasmic. 2 helical membrane-spanning segments follow: residues 165–185 (LVFV…LLVF) and 237–257 (GLLL…PMFL). At 258-296 (RLVIWALRGLRLAKAEEPDFMMNNSSSVGFSHLLPNLQT) the chain is on the cytoplasmic side. 2 consecutive transmembrane segments (helical) span residues 297–317 (IFLA…FCCL) and 353–373 (CSLV…TPSL). The Cytoplasmic segment spans residues 374–400 (TKLFSACQDHKQIGPESDDRTSKGKPF). The next 2 helical transmembrane spans lie at 401 to 421 (LKTM…LVCI) and 476 to 496 (SFSG…MLYG). At 497–509 (RLNSKDSTSARTR) the chain is on the cytoplasmic side.

Belongs to the TrkH potassium transport family. HKT (TC 2.A.38.3) subfamily. Expressed in spikelets, leaf blades, leaf sheaths, internodes, nodes, the base of stems and roots.

It localises to the cell membrane. It carries out the reaction K(+)(in) = K(+)(out). The enzyme catalyses Mg(2+)(in) = Mg(2+)(out). The catalysed reaction is Ca(2+)(in) = Ca(2+)(out). Its function is as follows. High-affinity potassium transporter that does not show potassium-sodium cotransport. Potassium transport seems to be independent of sodium. Mediates transport of the divalent cations magnesium and calcium in the absence of competing potassium ions. Selectivity for potassium is dominant over divalent cations, and magnesium and calcium transport may be small and may depend on competing potassium concentrations. This chain is Cation transporter HKT2;4, found in Oryza sativa subsp. japonica (Rice).